The following is a 1110-amino-acid chain: Nitric oxide synthase 3 (1110 aa).

The tract at residues 1–74 (MGNFKSVGQE…PPEGPKFPRV (74 aa)) is disordered. Residues 15–27 (CGLGLGLGLGLCG) show a composition bias toward gly residues. The segment covering 31–40 (PASPAPVSAS) has biased composition (low complexity). Residues 47–69 (SSPPLPLPAPEHSPPLTRPPEGP) show a composition bias toward pro residues. 2 residues coordinate Zn(2+): cysteine 97 and cysteine 102. The interaction with NOSIP stretch occupies residues 101-489 (RCLGSLVFPR…PDPWKGSGTK (389 aa)). Serine 105 provides a ligand contact to (6R)-L-erythro-5,6,7,8-tetrahydrobiopterin. Serine 117 is subject to Phosphoserine. Residue cysteine 187 coordinates heme b. 4 residues coordinate L-arginine: glutamine 250, tryptophan 359, tyrosine 360, and glutamate 364. Arginine 368 lines the (6R)-L-erythro-5,6,7,8-tetrahydrobiopterin pocket. Residue asparagine 369 coordinates L-arginine. Residues alanine 449, tryptophan 450, and phenylalanine 463 each coordinate (6R)-L-erythro-5,6,7,8-tetrahydrobiopterin. A heme b-binding site is contributed by tyrosine 478. Position 498 is a phosphothreonine (threonine 498). FMN contacts are provided by serine 529, glutamate 530, threonine 531, arginine 533, serine 575, and threonine 576. 3 positions are modified to phosphoserine: serine 618, serine 636, and serine 641. FMN-binding residues include serine 657, cysteine 664, glutamate 690, and glutamine 694. Arginine 779 is a binding site for NADP(+). Histidine 801 is a binding site for FAD. The interval 821 to 848 (EDPPPPAESVAVEQLEKGSPGGPPPGWV) is disordered. Phosphoserine is present on serine 839. Residues arginine 941, tyrosine 943, serine 944, threonine 959, alanine 961, tyrosine 965, valine 978, cysteine 979, and serine 980 each coordinate FAD. Threonine 1019, arginine 1052, serine 1081, arginine 1082, and lysine 1088 together coordinate NADP(+).

Belongs to the NOS family. As to quaternary structure, homodimer. Interacts with NOSIP and NOSTRIN. Interacts with HSP90AB1. Forms a complex with ASL, ASS1 and SLC7A1; the complex regulates cell-autonomous L-arginine synthesis and citrulline recycling while channeling extracellular L-arginine to nitric oxide synthesis pathway. Heme b serves as cofactor. The cofactor is FAD. It depends on FMN as a cofactor. (6R)-L-erythro-5,6,7,8-tetrahydrobiopterin is required as a cofactor.

Its subcellular location is the membrane. It is found in the caveola. The protein localises to the cytoplasm. It localises to the cytoskeleton. The protein resides in the golgi apparatus. Its subcellular location is the cell membrane. The enzyme catalyses 2 L-arginine + 3 NADPH + 4 O2 + H(+) = 2 L-citrulline + 2 nitric oxide + 3 NADP(+) + 4 H2O. Stimulated by calcium/calmodulin. Inhibited by NOSIP and NOSTRIN. Functionally, produces nitric oxide (NO) which is implicated in vascular smooth muscle relaxation through a cGMP-mediated signal transduction pathway. NO mediates vascular endothelial growth factor (VEGF)-induced angiogenesis in coronary vessels and promotes blood clotting through the activation of platelets. In Cavia porcellus (Guinea pig), this protein is Nitric oxide synthase 3 (NOS3).